A 330-amino-acid polypeptide reads, in one-letter code: Phenylalanine--tRNA ligase alpha subunit (330 aa).

Residue Glu-246 coordinates Mg(2+).

This sequence belongs to the class-II aminoacyl-tRNA synthetase family. Phe-tRNA synthetase alpha subunit type 1 subfamily. In terms of assembly, tetramer of two alpha and two beta subunits. It depends on Mg(2+) as a cofactor.

The protein resides in the cytoplasm. It carries out the reaction tRNA(Phe) + L-phenylalanine + ATP = L-phenylalanyl-tRNA(Phe) + AMP + diphosphate + H(+). In Sulfurimonas denitrificans (strain ATCC 33889 / DSM 1251) (Thiomicrospira denitrificans (strain ATCC 33889 / DSM 1251)), this protein is Phenylalanine--tRNA ligase alpha subunit.